A 287-amino-acid chain; its full sequence is Probable endonuclease 4 (287 aa).

Zn(2+) contacts are provided by histidine 69, histidine 109, glutamate 144, aspartate 178, histidine 181, histidine 215, aspartate 228, histidine 230, and glutamate 260.

It belongs to the AP endonuclease 2 family. It depends on Zn(2+) as a cofactor.

It carries out the reaction Endonucleolytic cleavage to 5'-phosphooligonucleotide end-products.. Endonuclease IV plays a role in DNA repair. It cleaves phosphodiester bonds at apurinic or apyrimidinic (AP) sites, generating a 3'-hydroxyl group and a 5'-terminal sugar phosphate. This chain is Probable endonuclease 4, found in Thermotoga petrophila (strain ATCC BAA-488 / DSM 13995 / JCM 10881 / RKU-1).